The chain runs to 317 residues: Cytochrome f (317 aa).

The N-terminal stretch at 1–34 (MKGLKNQIMKKTSLFICTLLFISSIVFHPKITFA) is a signal peptide. Residues tyrosine 35, cysteine 55, cysteine 58, and histidine 59 each coordinate heme. Residues 284–304 (VIGLIAFFIGVGLTQILLVLK) form a helical membrane-spanning segment.

The protein belongs to the cytochrome f family. In terms of assembly, the 4 large subunits of the cytochrome b6-f complex are cytochrome b6, subunit IV (17 kDa polypeptide, PetD), cytochrome f and the Rieske protein, while the 4 small subunits are PetG, PetL, PetM and PetN. The complex functions as a dimer. Requires heme as cofactor.

It is found in the cellular thylakoid membrane. Its function is as follows. Component of the cytochrome b6-f complex, which mediates electron transfer between photosystem II (PSII) and photosystem I (PSI), cyclic electron flow around PSI, and state transitions. The polypeptide is Cytochrome f (Prochlorococcus marinus (strain MIT 9301)).